Consider the following 572-residue polypeptide: Proline--tRNA ligase (572 aa).

It belongs to the class-II aminoacyl-tRNA synthetase family. ProS type 1 subfamily. In terms of assembly, homodimer.

It is found in the cytoplasm. The enzyme catalyses tRNA(Pro) + L-proline + ATP = L-prolyl-tRNA(Pro) + AMP + diphosphate. Its function is as follows. Catalyzes the attachment of proline to tRNA(Pro) in a two-step reaction: proline is first activated by ATP to form Pro-AMP and then transferred to the acceptor end of tRNA(Pro). As ProRS can inadvertently accommodate and process non-cognate amino acids such as alanine and cysteine, to avoid such errors it has two additional distinct editing activities against alanine. One activity is designated as 'pretransfer' editing and involves the tRNA(Pro)-independent hydrolysis of activated Ala-AMP. The other activity is designated 'posttransfer' editing and involves deacylation of mischarged Ala-tRNA(Pro). The misacylated Cys-tRNA(Pro) is not edited by ProRS. This Alteromonas mediterranea (strain DSM 17117 / CIP 110805 / LMG 28347 / Deep ecotype) protein is Proline--tRNA ligase.